A 418-amino-acid chain; its full sequence is Lysophosphatidic acid phosphatase type 6 (418 aa).

A mitochondrion-targeting transit peptide spans 1–25; that stretch reads MRVWVPVGVLTSLAYCFHQRRVALA. Positions 51–161 are substrate binding; it reads RHGARSPLKP…VFIRSTNMFR (111 aa). Catalysis depends on histidine 52, which acts as the Nucleophile. Aspartate 327 functions as the Proton donor in the catalytic mechanism.

Belongs to the histidine acid phosphatase family. Monomer.

Its subcellular location is the mitochondrion. It carries out the reaction a phosphate monoester + H2O = an alcohol + phosphate. The catalysed reaction is 1-(9Z-octadecenoyl)-sn-glycero-3-phosphate + H2O = 1-(9Z-octadecenoyl)-sn-glycerol + phosphate. Functionally, hydrolyzes lysophosphatidic acid (LPA) containing a medium length fatty acid chain to the corresponding monoacylglycerol. Has highest activity with lysophosphatidic acid containing myristate (C14:0), monounsaturated oleate (C18:1) or palmitate (C16:0), and lower activity with C18:0 and C6:0 lysophosphatidic acid. The sequence is that of Lysophosphatidic acid phosphatase type 6 (Acp6) from Mus musculus (Mouse).